A 415-amino-acid polypeptide reads, in one-letter code: Glutamyl-tRNA reductase (415 aa).

Residues 49–52 (TCNR), serine 104, 109–111 (EPQ), and glutamine 115 contribute to the substrate site. Cysteine 50 acts as the Nucleophile in catalysis. 184–189 (GAGEMI) provides a ligand contact to NADP(+).

This sequence belongs to the glutamyl-tRNA reductase family. In terms of assembly, homodimer.

It catalyses the reaction (S)-4-amino-5-oxopentanoate + tRNA(Glu) + NADP(+) = L-glutamyl-tRNA(Glu) + NADPH + H(+). The protein operates within porphyrin-containing compound metabolism; protoporphyrin-IX biosynthesis; 5-aminolevulinate from L-glutamyl-tRNA(Glu): step 1/2. Catalyzes the NADPH-dependent reduction of glutamyl-tRNA(Glu) to glutamate 1-semialdehyde (GSA). The sequence is that of Glutamyl-tRNA reductase from Neisseria meningitidis serogroup C (strain 053442).